The sequence spans 80 residues: Bowman-Birk type proteinase inhibitor (80 aa).

Disulfide bonds link Cys19–Cys70, Cys20–Cys35, Cys23–Cys66, Cys25–Cys33, Cys41–Cys47, Cys44–Cys59, and Cys49–Cys57.

In terms of assembly, occurs as a monomer, dimer or trimer. The dimer may be the active form. Post-translationally, binds calcium, probably through His-3 to His-6.

Functionally, protease inhibitor with activity against cysteine, aspartic and serine proteases. Highest activity against serine proteases, in particular trypsin and trypsin-like proteases. The protein is Bowman-Birk type proteinase inhibitor of Phaseolus acutifolius (Tepary bean).